Here is a 155-residue protein sequence, read N- to C-terminus: Snaclec agkicetin-C subunit alpha (155 aa).

An N-terminal signal peptide occupies residues 1–23 (MGRFIFVSFGLLVVFLSLSGTAA). 3 disulfide bridges follow: Cys25/Cys36, Cys53/Cys149, and Cys124/Cys141. Residues 32–150 (YIRFCYQPFK…CGLKHVFMCK (119 aa)) form the C-type lectin domain.

It belongs to the snaclec family. In terms of assembly, heterodimer of subunits alpha and beta; disulfide-linked. Expressed by the venom gland.

It is found in the secreted. In terms of biological role, is a potent glycoprotein Ibalpha (GP1BA) antagonist. Concentration-dependently inhibits botrocetin-, ristocetin- and low dose thrombin-induced platelet aggregation. Inhibits platelet adhesion only through inhibiting the vWF interaction with GP1BA, but has minimal effect on other platelet receptors, such as alpha-IIb/beta-3 (ITGA2B/ITGB3) or alpha-2/beta-1 (ITGA2/ITGB1). Causes an instant severe thrombocytopenia in rats and is not lethal to mice. The sequence is that of Snaclec agkicetin-C subunit alpha from Deinagkistrodon acutus (Hundred-pace snake).